Reading from the N-terminus, the 432-residue chain is RING finger protein 44 (432 aa).

The disordered stretch occupies residues 1–86 (MRPWALAVTR…GGSPRMLHPA (86 aa)). Residues 56 to 65 (QQPPSRPPHL) show a composition bias toward pro residues. The RING-type; atypical zinc finger occupies 380 to 421 (CVVCFSDFEARQLLRVLPCNHEFHTKCVDKWLKANRTCPICR).

This Homo sapiens (Human) protein is RING finger protein 44 (RNF44).